The following is an 81-amino-acid chain: Antimicrobial peptide D1 (81 aa).

The N-terminal stretch at 1–31 (MAKTVLGIHVTFLTLLFAVLLLNDVMYTPVE) is a signal peptide. 4 cysteine pairs are disulfide-bonded: Cys34–Cys81, Cys45–Cys66, Cys51–Cys75, and Cys55–Cys77.

Functionally, antimicrobial peptide probably active against fungi like B.sorokiniana, F.oxysporum, F.graminearum, F.avenaceum, B.cinerea, P.beta, P.infestans and P.debaryanum. The polypeptide is Antimicrobial peptide D1 (Stellaria media (Common chickweed)).